A 324-amino-acid chain; its full sequence is 3-hydroxyisobutyrate dehydrogenase, mitochondrial (324 aa).

The N-terminal 25 residues, 1–25 (MSLRVMSPAMLNAWSQTLVRAMSTQ), are a transit peptide targeting the mitochondrion. NAD(+)-binding positions include 29-58 (KNIGFVGLGNMGANMASNLIKAGHKLHVFD), 92-93 (LP), and Thr121. Lys196 is an active-site residue. Lys271 contributes to the NAD(+) binding site.

Belongs to the HIBADH-related family. 3-hydroxyisobutyrate dehydrogenase subfamily.

The protein resides in the mitochondrion. It carries out the reaction 3-hydroxy-2-methylpropanoate + NAD(+) = 2-methyl-3-oxopropanoate + NADH + H(+). Its pathway is amino-acid degradation; L-valine degradation. In Drosophila melanogaster (Fruit fly), this protein is 3-hydroxyisobutyrate dehydrogenase, mitochondrial.